The primary structure comprises 87 residues: Exendin-4 (87 aa).

The signal sequence occupies residues 1-23 (MKIILWLCVFGLFLATLFPISWQ). The propeptide occupies 24-45 (MPVESGLSSEDSASSESFASKI). At Ser-86 the chain carries Serine amide.

The protein belongs to the glucagon family. In terms of tissue distribution, expressed by the venom gland.

Its subcellular location is the secreted. Its function is as follows. Venom protein that mimics the incretin hormone glucagon-like peptide 1 (GLP-1). It stimulates insulin synthesis and secretion, protects against beta-cell apoptosis in response to different insults, and promotes beta-cell proliferation It also promotes satiety, reduces food intake, reduces fat deposition, reduces body weight and inhibits gastric emptying. Interacts with GLP-1 receptor (GLP1R). Induces hypotension that is mediated by relaxation of cardiac smooth muscle. The protein is Exendin-4 of Heloderma suspectum cinctum (Banded Gila monster).